The primary structure comprises 833 residues: Enhancer of filamentation 1 (833 aa).

Residues 3–65 enclose the SH3 domain; the sequence is ARNLMARALY…PGNRVKLLIG (63 aa). Y91, Y163, Y165, Y176, Y188, Y213, and Y222 each carry phosphotyrosine. The tract at residues 237 to 258 is disordered; it reads EKEYDFPPPMKQDGKPDTRPEG. Basic and acidic residues predominate over residues 248-258; it reads QDGKPDTRPEG. A Phosphoserine modification is found at S295. 3 disordered regions span residues 297-316, 326-403, and 560-623; these read SLHHAPSQLGQSGDTQSDAY, EVPT…RLRL, and PANS…SERS. Positions 304–314 are enriched in polar residues; that stretch reads QLGQSGDTQSD. Y316 is modified (phosphotyrosine). Residues 331-343 show a composition bias toward basic and acidic residues; it reads TSEKANPEERDGV. An interacts with CTTN region spans residues 350–833; the sequence is NPADAKGSRD…KRSLLEMATF (484 aa). The Caspase cleavage related site motif lies at 359–362; that stretch reads DVVD. S368 carries the post-translational modification Phosphoserine. Residues 368–396 are compositionally biased toward low complexity; sequence SFSSTGSTRSNMSTSSTSSKESSLSASPS. Positions 564–586 are enriched in polar residues; sequence HLKNGPNSIMNSSEYTHPGSQMQ. The divergent helix-loop-helix motif stretch occupies residues 709–759; it reads FYYDQCETHFISLLNAIDALFSCVSSAQPPRIFVAHSKFVILSAHKLVFIG. The segment at 709–833 is required for interaction with PLK1; that stretch reads FYYDQCETHF…KRSLLEMATF (125 aa). S779 bears the Phosphoserine mark. A Phosphothreonine modification is found at T803.

It belongs to the CAS family. Homodimer. Forms heterodimers with BCAR1/p130cas. Forms complexes with PTK2B/RAFTK, adapter protein CRKL and LYN kinase. Part of a complex composed of NEDD9, AURKA and CTTN; within the complex NEDD9 acts as a scaffold protein and is required for complex formation. Part of a ternary complex composed of SMAD3, ITCH/AIP4 and NEDD9/HEF1; within the complex NEDD9/HEF1 interacts (via N-terminus) with ITCH/AIP4 (via WW domains); the complex mediates ubiquitination and proteasomal degradation of NEDD9/HEF1. Interacts with SMAD3; the interaction promotes NEDD9 ubiquitination and proteasomal degradation. Interacts with ID2. Interacts with CTTN (via N-terminus). Interacts with MICAL. Interacts with TXNL4/DIM1. Interacts with BCAR3 (via Ras-GEF domain). Interacts with SH2D3C isoform 1 and isoform 2. Interacts with ECT2. Interacts with PTPN11/SHP-2 (via SH2 domains); the interaction is enhanced when NEDD9/CAS-L is tyrosine phosphorylated. Interacts (via C-terminus) with PLK1 (via polo box domains). Interacts with NKX2-5. Interacts with SMAD3; the interaction is inhibited by oxidation of NEDD9. Interacts with NEDD9/HEF1; interaction is induced by CXCL12 promotion of ABL-mediated phosphorylation of NEDD9/HEF1. Interacts (via SH3 domain) with PTK2/FAK. Interacts with FYN; in the presence of PTK2. Interacts with INPPL1/SHIP2. In terms of processing, polyubiquitinated by ITCH/AIP4, leading to proteasomal degradation. PTK2/FAK1 phosphorylates the protein at the YDYVHL motif (conserved among all cas proteins) following integrin stimulation. The SRC family kinases (FYN, SRC, LCK and CRK) are recruited to the phosphorylated sites and can phosphorylate other tyrosine residues. Ligation of either integrin beta-1 or B-cell antigen receptor on tonsillar B-cells and B-cell lines promotes tyrosine phosphorylation and both integrin and BCR-mediated tyrosine phosphorylation requires an intact actin network. Phosphorylation is required to recruit NEDD9 to T-cell receptor microclusters at the periphery of newly formed immunological synapses. In fibroblasts transformation with oncogene v-ABL results in an increase in tyrosine phosphorylation. Transiently phosphorylated following CD3 cross-linking and this phosphorylated form binds to CRKL and C3G. A mutant lacking the SH3 domain is phosphorylated upon CD3 cross-linking but not upon integrin beta-1 cross-linking. Tyrosine phosphorylation occurs upon stimulation of the G-protein coupled C1a calcitonin receptor. Calcitonin-stimulated tyrosine phosphorylation is mediated by calcium- and protein kinase C-dependent mechanisms and requires the integrity of the actin cytoskeleton. Phosphorylation at Ser-368 induces proteasomal degradation. Phosphorylated by LYN. Phosphorylation at Ser-779 by CSNK1D or CSNK1E, or phosphorylation of Thr-803 by CSNK1E enhances the interaction of NEDD9 with PLK1. Expressed in splenic lymphocytes (at protein level). Expressed in T-cells (at protein level). Expressed in the thymus. Expressed throughout the brain however particularly abundant in the cortex and hippocampus.

It is found in the cytoplasm. The protein localises to the cell cortex. The protein resides in the nucleus. It localises to the golgi apparatus. Its subcellular location is the cell projection. It is found in the lamellipodium. The protein localises to the cell junction. The protein resides in the focal adhesion. It localises to the cytoskeleton. Its subcellular location is the spindle pole. It is found in the cilium. The protein localises to the cilium basal body. The protein resides in the basolateral cell membrane. Its function is as follows. Scaffolding protein which plays a central coordinating role for tyrosine-kinase-based signaling related to cell adhesion. As a focal adhesion protein, plays a role in embryonic fibroblast migration. May play an important role in integrin beta-1 or B cell antigen receptor (BCR) mediated signaling in B- and T-cells. Integrin beta-1 stimulation leads to recruitment of various proteins including CRKl and SHPTP2 to the tyrosine phosphorylated form. Promotes adhesion and migration of lymphocytes; as a result required for the correct migration of lymphocytes to the spleen and other secondary lymphoid organs. Plays a role in the organization of T-cell F-actin cortical cytoskeleton and the centralization of T-cell receptor microclusters at the immunological synapse. Negatively regulates cilia outgrowth in polarized cysts. Modulates cilia disassembly via activation of AURKA-mediated phosphorylation of HDAC6 and subsequent deacetylation of alpha-tubulin. Positively regulates RANKL-induced osteoclastogenesis. Required for the maintenance of hippocampal dendritic spines in the dentate gyrus and CA1 regions, thereby involved in spatial learning and memory. This Mus musculus (Mouse) protein is Enhancer of filamentation 1.